The chain runs to 758 residues: Aspartyl/asparaginyl beta-hydroxylase (758 aa).

Residues 1–46 are disordered; the sequence is MAQRKNAKSSGNSSSSGSGSGSTSAGSSSPGARRETKHGGHKNGRK. Residues 1–53 are Cytoplasmic-facing; the sequence is MAQRKNAKSSGNSSSSGSGSGSTSAGSSSPGARRETKHGGHKNGRKGGLSGTS. The segment covering 9–31 has biased composition (low complexity); that stretch reads SSGNSSSSGSGSGSTSAGSSSPG. S14 is modified (phosphoserine). Residues 54–74 form a helical; Signal-anchor for type II membrane protein membrane-spanning segment; that stretch reads FFTWFMVIALLGVWTSVAVVW. The N-linked (GlcNAc...) asparagine glycan is linked to L64. The Lumenal portion of the chain corresponds to 75-758; the sequence is FDLVDYEEVL…PQQRRSLPAI (684 aa). Ca(2+)-binding residues include D91, D93, D95, D97, and D102. Disordered stretches follow at residues 111 to 140 and 304 to 324; these read ERST…EAEP and EEQQ…EQKA. The segment covering 313–324 has biased composition (basic and acidic residues); the sequence is TNRKTDDPEQKA. The TPR 1 repeat unit spans residues 341–374; the sequence is IKAELDAAEKLRKRGKIEEAVNAFKELVRKYPQS. N-linked (GlcNAc...) asparagine glycosylation is present at N452. 3 TPR repeats span residues 454–487, 489–521, and 525–557; these read TSLK…TPND, FAKV…GDPG, and GRFY…GHFA. W625 lines the 2-oxoglutarate pocket. C641 and C648 are disulfide-bonded. S668 contacts 2-oxoglutarate. Residue H679 coordinates Fe cation. Residue 688–690 participates in 2-oxoglutarate binding; that stretch reads RMH. An N-linked (GlcNAc...) asparagine glycan is attached at N706. H725 is a binding site for Fe cation. A 2-oxoglutarate-binding site is contributed by R735.

This sequence belongs to the aspartyl/asparaginyl beta-hydroxylase family. In terms of assembly, monomer. Isoform 8 interacts with ORAI1 and STIM1. Isoform 4 interacts with CASQ2. The cofactor is Fe cation. As to expression, isoform 1 is detected in all tissues tested. Isoform 8 is mainly expressed in pancreas, heart, brain, kidney and liver. Isoform 8 is expressed in kidney (at protein level).

Its subcellular location is the endoplasmic reticulum membrane. The protein resides in the sarcoplasmic reticulum membrane. The catalysed reaction is L-aspartyl-[protein] + 2-oxoglutarate + O2 = 3-hydroxy-L-aspartyl-[protein] + succinate + CO2. In terms of biological role, specifically hydroxylates an Asp or Asn residue in certain epidermal growth factor-like (EGF) domains of a number of proteins. Membrane-bound Ca(2+)-sensing protein, which is a structural component of the ER-plasma membrane junctions. Isoform 8 regulates the activity of Ca(+2) released-activated Ca(+2) (CRAC) channels in T-cells. The sequence is that of Aspartyl/asparaginyl beta-hydroxylase (ASPH) from Homo sapiens (Human).